Reading from the N-terminus, the 124-residue chain is Probable 5-hydroxyisourate hydrolase (124 aa).

Substrate-binding residues include His-16, Arg-57, and Tyr-121.

Belongs to the transthyretin family. 5-hydroxyisourate hydrolase subfamily. Homotetramer.

It catalyses the reaction 5-hydroxyisourate + H2O = 5-hydroxy-2-oxo-4-ureido-2,5-dihydro-1H-imidazole-5-carboxylate + H(+). Its function is as follows. Catalyzes the hydrolysis of 5-hydroxyisourate (HIU) to 2-oxo-4-hydroxy-4-carboxy-5-ureidoimidazoline (OHCU). The chain is Probable 5-hydroxyisourate hydrolase from Schizosaccharomyces pombe (strain 972 / ATCC 24843) (Fission yeast).